Consider the following 355-residue polypeptide: Peptide chain release factor 1 (355 aa).

An N5-methylglutamine modification is found at glutamine 233.

This sequence belongs to the prokaryotic/mitochondrial release factor family. Post-translationally, methylated by PrmC. Methylation increases the termination efficiency of RF1.

The protein resides in the cytoplasm. Peptide chain release factor 1 directs the termination of translation in response to the peptide chain termination codons UAG and UAA. The chain is Peptide chain release factor 1 from Clostridium tetani (strain Massachusetts / E88).